A 310-amino-acid chain; its full sequence is Aspartate carbamoyltransferase catalytic subunit (310 aa).

Carbamoyl phosphate-binding residues include R58 and T59. Position 86 (K86) interacts with L-aspartate. Carbamoyl phosphate contacts are provided by R108, H136, and Q139. L-aspartate-binding residues include R169 and R222. 2 residues coordinate carbamoyl phosphate: G264 and P265.

It belongs to the aspartate/ornithine carbamoyltransferase superfamily. ATCase family. As to quaternary structure, heterododecamer (2C3:3R2) of six catalytic PyrB chains organized as two trimers (C3), and six regulatory PyrI chains organized as three dimers (R2).

It carries out the reaction carbamoyl phosphate + L-aspartate = N-carbamoyl-L-aspartate + phosphate + H(+). It functions in the pathway pyrimidine metabolism; UMP biosynthesis via de novo pathway; (S)-dihydroorotate from bicarbonate: step 2/3. In terms of biological role, catalyzes the condensation of carbamoyl phosphate and aspartate to form carbamoyl aspartate and inorganic phosphate, the committed step in the de novo pyrimidine nucleotide biosynthesis pathway. The chain is Aspartate carbamoyltransferase catalytic subunit from Campylobacter fetus subsp. fetus (strain 82-40).